Reading from the N-terminus, the 587-residue chain is Kelch-like protein 3 (587 aa).

S10 carries the phosphoserine modification. Residues C50–E117 enclose the BTB domain. The BACK domain maps to C152–E254. T295 is subject to Phosphothreonine. 6 Kelch repeats span residues V302–G347, H348–D394, L396–G441, K442–G490, Q491–G537, and L539–K585. Residue T375 is modified to Phosphothreonine. A phosphoserine mark is found at S376 and S433.

It belongs to the KLHL3 family. Homodimer. Component of the BCR(KLHL3) E3 ubiquitin ligase complex, at least composed of CUL3 and KLHL3 and RBX1. Interacts with CLDN8. Phosphorylation at Ser-433 by PKA or PKC decreases the interaction with WNK1 and WNK4, leading to inhibit their degradation by the BCR(KLHL3) complex. Phosphorylated at Ser-433 by PKC in response to angiotensin II signaling, decreasing ability to promote degradation of WNK1 and WNK4, leading to activation of Na-Cl cotransporter SLC12A3/NCC. Phosphorylation at Ser-433 is increased by insulin. Dephosphorylated at Ser-433 by calcineurin PPP3CA, promoting degradation of WNK1 and WNK4.

Its subcellular location is the cytoplasm. It is found in the cytoskeleton. The protein localises to the cytosol. It functions in the pathway protein modification; protein ubiquitination. Substrate-specific adapter of a BCR (BTB-CUL3-RBX1) E3 ubiquitin ligase complex that acts as a regulator of ion transport in the distal nephron. The BCR(KLHL3) complex acts by mediating ubiquitination and degradation of WNK1 and WNK4, two activators of Na-Cl cotransporter SLC12A3/NCC in distal convoluted tubule cells of kidney, thereby regulating NaCl reabsorption. The BCR(KLHL3) complex also mediates ubiquitination and degradation of WNK3. The BCR(KLHL3) complex also mediates ubiquitination of CLDN8, a tight-junction protein required for paracellular chloride transport in the kidney, leading to its degradation. The protein is Kelch-like protein 3 (KLHL3) of Pongo abelii (Sumatran orangutan).